The chain runs to 419 residues: UPF0761 membrane protein ACIAD3168 (419 aa).

Helical transmembrane passes span 42–62 (ALTY…LVII), 105–125 (LTVI…STIE), 148–168 (WTII…SSTV), 186–206 (AFIL…ILYW), 212–232 (TVPM…FELL), and 252–272 (AFAA…IVLL).

It belongs to the UPF0761 family.

It is found in the cell inner membrane. The protein is UPF0761 membrane protein ACIAD3168 of Acinetobacter baylyi (strain ATCC 33305 / BD413 / ADP1).